We begin with the raw amino-acid sequence, 423 residues long: Glutamate-1-semialdehyde 2,1-aminomutase (423 aa).

K266 carries the N6-(pyridoxal phosphate)lysine modification.

Belongs to the class-III pyridoxal-phosphate-dependent aminotransferase family. HemL subfamily. In terms of assembly, homodimer. Pyridoxal 5'-phosphate is required as a cofactor.

The protein localises to the cytoplasm. The enzyme catalyses (S)-4-amino-5-oxopentanoate = 5-aminolevulinate. It functions in the pathway porphyrin-containing compound metabolism; protoporphyrin-IX biosynthesis; 5-aminolevulinate from L-glutamyl-tRNA(Glu): step 2/2. This chain is Glutamate-1-semialdehyde 2,1-aminomutase, found in Nitratidesulfovibrio vulgaris (strain ATCC 29579 / DSM 644 / CCUG 34227 / NCIMB 8303 / VKM B-1760 / Hildenborough) (Desulfovibrio vulgaris).